Here is a 434-residue protein sequence, read N- to C-terminus: UDP-N-acetylglucosamine 1-carboxyvinyltransferase (434 aa).

22–23 (KN) contacts phosphoenolpyruvate. Arg97 serves as a coordination point for UDP-N-acetyl-alpha-D-glucosamine. Asp121 (proton donor) is an active-site residue. Positions 319 and 341 each coordinate UDP-N-acetyl-alpha-D-glucosamine.

This sequence belongs to the EPSP synthase family. MurA subfamily.

The protein localises to the cytoplasm. It carries out the reaction phosphoenolpyruvate + UDP-N-acetyl-alpha-D-glucosamine = UDP-N-acetyl-3-O-(1-carboxyvinyl)-alpha-D-glucosamine + phosphate. Its pathway is cell wall biogenesis; peptidoglycan biosynthesis. In terms of biological role, cell wall formation. Adds enolpyruvyl to UDP-N-acetylglucosamine. The protein is UDP-N-acetylglucosamine 1-carboxyvinyltransferase of Porphyromonas gingivalis (strain ATCC BAA-308 / W83).